The primary structure comprises 405 residues: MALVVQKYGGTSVGDLERIHKVAQRIAHYREKGHRLAVVVSAMGHTTDELIALAKRVNPRPPFRELDLLTTTGEQVSVALLSMQLWAMGIPAKGFVQHQIGITTDGRYGDARILEVNPARIREALEQGFVAVIAGFMGTTPEGEITTLGRGGSDTTAVAIAAALGAKECEIYTDTEGVYTTDPHLIPEARKLSVIGYDQMLEMAALGARVLHPRAVYYAKRYGVVLHVRSSFSYNPGTLVKEVAMEMDKAVTGVALDLDHAQIGLIGIPDQPGIAAKVFQALAERGIAVDMIIQGVPGHDPSRQQMAFTVKKDFAQEALEALEPVLAEIGGEAILRPDIAKVSIVGVGLASTPEVPAKMFQAVASTGANIEMIATSEVRISVIIPAEYAEAALRAVHQAFELDKA.

7-10 (KYGG) provides a ligand contact to ATP. Residue 25–30 (RIAHYR) participates in substrate binding. S41 lines the ATP pocket. Substrate contacts are provided by residues 47 to 49 (TDE), E74, 125 to 126 (LE), 150 to 153 (RGGS), and S153. Residues 173-174 (TD), 179-184 (YTTDPH), and R209 contribute to the ATP site. 2 consecutive ACT domains span residues 263-342 (IGLI…IAKV) and 344-405 (IVGV…LDKA). Substrate contacts are provided by residues D270, 288 to 290 (AVD), Q294, 355 to 356 (VP), 369 to 370 (NI), and 376 to 377 (SE).

Belongs to the aspartokinase family. As to quaternary structure, tetramer consisting of 2 isoforms Alpha (catalytic and regulation) and of a homodimer of 2 isoforms Beta (regulation).

The enzyme catalyses L-aspartate + ATP = 4-phospho-L-aspartate + ADP. The protein operates within amino-acid biosynthesis; L-lysine biosynthesis via DAP pathway; (S)-tetrahydrodipicolinate from L-aspartate: step 1/4. Its pathway is amino-acid biosynthesis; L-methionine biosynthesis via de novo pathway; L-homoserine from L-aspartate: step 1/3. It participates in amino-acid biosynthesis; L-threonine biosynthesis; L-threonine from L-aspartate: step 1/5. Its function is as follows. Catalyzes the phosphorylation of the beta-carboxyl group of aspartic acid with ATP to yield 4-phospho-L-aspartate, which is involved in the branched biosynthetic pathway leading to the biosynthesis of amino acids lysine, threonine, isoleucine and methionine. The sequence is that of Aspartokinase (ask) from Thermus thermophilus (strain ATCC BAA-163 / DSM 7039 / HB27).